The following is a 296-amino-acid chain: MDQKPDERVQSHRCELLDLPWEDVLVSHVFCHLPLRLLVSLQRVSKSFRSLIQVYLDNCRTFDPAQTGPHIPREAFCSILRHNQVLQHLSVTNCSDWITDTDLLPVIGQNQQLQHVDLRGCAQLSRRALVAVSLSCPRLQHLSLAHCEWVDSLALRSLADHCPMLRSLDLTACRQLKDPAVCYLAGKCPELRALSVAVNANITDTAVEEVAKKCREMERLDLTGCLRVRNEAIRTLAEYCPKLQSLKVNHCHNVTESSLGVLRRRNVEIDVEPPLQRALVLLQDVVGFAPFINLQI.

Residues 16–63 (LLDLPWEDVLVSHVFCHLPLRLLVSLQRVSKSFRSLIQVYLDNCRTFD) form the F-box domain. 5 LRR repeats span residues 138–159 (RLQHLSLAHCEWVDSLALRSLA), 164–185 (MLRSLDLTACRQLKDPAVCYLA), 190–211 (ELRALSVAVNANITDTAVEEVA), 216–237 (EMERLDLTGCLRVRNEAIRTLA), and 242–263 (KLQSLKVNHCHNVTESSLGVLR).

Belongs to the FBXL15 family. Part of the SCF (SKP1-CUL1-F-box) E3 ubiquitin-protein ligase complex SCF(FBXL15).

The protein localises to the cytoplasm. It participates in protein modification; protein ubiquitination. Functionally, substrate recognition component of a SCF (SKP1-CUL1-F-box protein) E3 ubiquitin-protein ligase complex which mediates the ubiquitination and subsequent proteasomal degradation of target proteins. Acts as a positive regulator of the BMP signaling pathway. Required for dorsal/ventral pattern formation. The polypeptide is F-box/LRR-repeat protein 15 (fbxl15) (Danio rerio (Zebrafish)).